The primary structure comprises 328 residues: tRNA uridine(34) hydroxylase (328 aa).

The Rhodanese domain maps to 130–224; it reads LDEDTVVLDT…YGKDPEVQGE (95 aa). Residue cysteine 184 is the Cysteine persulfide intermediate of the active site.

It belongs to the TrhO family.

The catalysed reaction is uridine(34) in tRNA + AH2 + O2 = 5-hydroxyuridine(34) in tRNA + A + H2O. Functionally, catalyzes oxygen-dependent 5-hydroxyuridine (ho5U) modification at position 34 in tRNAs. The protein is tRNA uridine(34) hydroxylase of Streptococcus agalactiae serotype Ia (strain ATCC 27591 / A909 / CDC SS700).